The primary structure comprises 729 residues: Capsid protein VP1 (729 aa).

Residues 1 to 10 (MAPPAKRAKR) show a composition bias toward basic residues. Disordered regions lie at residues 1–39 (MAPP…DAAA), 96–115 (LATD…KRTR), and 130–185 (KLTS…VGVS). The short motif at 4-13 (PAKRAKRGWV) is the Nuclear localization signal element. Residues 19–64 (YLGPGNSLDQGEPTNPSDAAAKEHDEAYDQYIKSGKNPYLYFSAAD) form a phospholipase A2-like region. The span at 25 to 35 (SLDQGEPTNPS) shows a compositional bias: polar residues. The segment covering 132–142 (TSSAAQQSSQT) has biased composition (low complexity). Residues 168-184 (GPGGSGGGGSGGGGVGV) are compositionally biased toward gly residues. Mg(2+) is bound at residue asparagine 325.

Belongs to the parvoviridae capsid protein family.

It localises to the virion. Its subcellular location is the host nucleus. Functionally, capsid protein self-assembles to form an icosahedral capsid with a T=1 symmetry, about 22 nm in diameter, and consisting of 60 copies of two size variants of the capsid proteins, VP1 and VP2, which differ by the presence of an N-terminal extension in the minor protein VP1. The capsid encapsulates the genomic ssDNA. Capsid proteins are responsible for the attachment to host cell receptors. This attachment induces virion internalization predominantly through clathrin-dependent endocytosis. Binding to the host receptors also induces capsid rearrangements leading to surface exposure of VP1 N-terminus, specifically its phospholipase A2-like region and putative nuclear localization signal(s). VP1 N-terminus might serve as a lipolytic enzyme to breach the endosomal membrane during entry into host cell and might contribute to virus transport to the nucleus. This Mus musculus (Mouse) protein is Capsid protein VP1.